Consider the following 136-residue polypeptide: Aspartate 1-decarboxylase (136 aa).

Catalysis depends on serine 25, which acts as the Schiff-base intermediate with substrate; via pyruvic acid. A Pyruvic acid (Ser) modification is found at serine 25. Threonine 57 lines the substrate pocket. Tyrosine 58 acts as the Proton donor in catalysis. A substrate-binding site is contributed by 73 to 75; that stretch reads GAA.

Belongs to the PanD family. Heterooctamer of four alpha and four beta subunits. Pyruvate is required as a cofactor. In terms of processing, is synthesized initially as an inactive proenzyme, which is activated by self-cleavage at a specific serine bond to produce a beta-subunit with a hydroxyl group at its C-terminus and an alpha-subunit with a pyruvoyl group at its N-terminus.

The protein resides in the cytoplasm. The enzyme catalyses L-aspartate + H(+) = beta-alanine + CO2. The protein operates within cofactor biosynthesis; (R)-pantothenate biosynthesis; beta-alanine from L-aspartate: step 1/1. In terms of biological role, catalyzes the pyruvoyl-dependent decarboxylation of aspartate to produce beta-alanine. In Mycolicibacterium smegmatis (strain ATCC 700084 / mc(2)155) (Mycobacterium smegmatis), this protein is Aspartate 1-decarboxylase.